The chain runs to 266 residues: NAD kinase 1 (266 aa).

The active-site Proton acceptor is aspartate 45. Residues 45–46 (DG), 122–123 (NE), and arginine 148 contribute to the NAD(+) site. Aspartate 150 serves as a coordination point for ATP. Residues serine 158 and 161–166 (TAYNKA) each bind NAD(+).

It belongs to the NAD kinase family. Homodimer. Ca(2+) serves as cofactor. Mn(2+) is required as a cofactor.

It is found in the cytoplasm. It carries out the reaction NAD(+) + ATP = ADP + NADP(+) + H(+). Allosterically inhibited by NADP and activated by quinolinic acid. Strongly inhibited by HgCl(2). In terms of biological role, involved in the regulation of the intracellular balance of NAD and NADP, and is a key enzyme in the biosynthesis of NADP. Catalyzes specifically the phosphorylation on 2'-hydroxyl of the adenosine moiety of NAD to yield NADP. It can use ATP and other nucleoside triphosphates (GTP, UTP) as well as inorganic polyphosphate (poly(P)) as a source of phosphorus. This chain is NAD kinase 1 (ppnKA), found in Bacillus subtilis (strain 168).